Consider the following 405-residue polypeptide: Probable dual-specificity RNA methyltransferase RlmN (405 aa).

Residues 1-15 show a composition bias toward low complexity; sequence MSSTGSSVSTSGLVL. A disordered region spans residues 1 to 34; sequence MSSTGSSVSTSGLVLPSTPLAEPGKEVPLVVNTP. Residue Glu-130 is the Proton acceptor of the active site. Positions 142–386 constitute a Radical SAM core domain; the sequence is SAARATLCLS…VTVRDTRGSE (245 aa). Residues Cys-149 and Cys-391 are joined by a disulfide bond. Residues Cys-156, Cys-160, and Cys-163 each contribute to the [4Fe-4S] cluster site. Residues 211 to 212, Ser-245, 268 to 270, and Asn-348 contribute to the S-adenosyl-L-methionine site; these read GE and SLH. The active-site S-methylcysteine intermediate is the Cys-391.

The protein belongs to the radical SAM superfamily. RlmN family. It depends on [4Fe-4S] cluster as a cofactor.

The protein resides in the cytoplasm. It carries out the reaction adenosine(2503) in 23S rRNA + 2 reduced [2Fe-2S]-[ferredoxin] + 2 S-adenosyl-L-methionine = 2-methyladenosine(2503) in 23S rRNA + 5'-deoxyadenosine + L-methionine + 2 oxidized [2Fe-2S]-[ferredoxin] + S-adenosyl-L-homocysteine. The enzyme catalyses adenosine(37) in tRNA + 2 reduced [2Fe-2S]-[ferredoxin] + 2 S-adenosyl-L-methionine = 2-methyladenosine(37) in tRNA + 5'-deoxyadenosine + L-methionine + 2 oxidized [2Fe-2S]-[ferredoxin] + S-adenosyl-L-homocysteine. In terms of biological role, specifically methylates position 2 of adenine 2503 in 23S rRNA and position 2 of adenine 37 in tRNAs. The sequence is that of Probable dual-specificity RNA methyltransferase RlmN from Cutibacterium acnes (strain DSM 16379 / KPA171202) (Propionibacterium acnes).